The chain runs to 165 residues: Destrin (165 aa).

Position 2 is an N-acetylalanine (Ala2). Position 3 is a phosphoserine (Ser3). The region spanning 4–153 (GVQVADEVCR…NRTSIAEKLG (150 aa)) is the ADF-H domain. At Lys19 the chain carries N6-acetyllysine. The Nuclear localization signal signature appears at 30–34 (KKRKK).

This sequence belongs to the actin-binding proteins ADF family. Post-translationally, ISGylated.

In terms of biological role, actin-depolymerizing protein. Severs actin filaments (F-actin) and binds to actin monomers (G-actin). Acts in a pH-independent manner. The polypeptide is Destrin (Dstn) (Rattus norvegicus (Rat)).